Consider the following 356-residue polypeptide: Tyrosine recombinase XerS (356 aa).

The 106-residue stretch at 16–121 (IMPWYVLEYY…ALSSLYKYLT (106 aa)) folds into the Core-binding (CB) domain. The region spanning 169–354 (GFLTYIDQEY…VNDEQKNALD (186 aa)) is the Tyr recombinase domain. Catalysis depends on residues arginine 210, lysine 234, histidine 306, arginine 309, and histidine 332. The active-site O-(3'-phospho-DNA)-tyrosine intermediate is the tyrosine 341.

The protein belongs to the 'phage' integrase family. XerS subfamily.

The protein localises to the cytoplasm. With respect to regulation, ftsK is required for recombination. Functionally, site-specific tyrosine recombinase, which acts by catalyzing the cutting and rejoining of the recombining DNA molecules. Essential to convert dimers of the bacterial chromosome into monomers to permit their segregation at cell division. This chain is Tyrosine recombinase XerS, found in Streptococcus pneumoniae (strain Hungary19A-6).